The sequence spans 438 residues: Cobyrinate a,c-diamide synthase (438 aa).

The 185-residue stretch at 242–426 (TIAIARDAAF…FHAYFSSCPA (185 aa)) folds into the GATase cobBQ-type domain. C325 acts as the Nucleophile in catalysis.

This sequence belongs to the CobB/CbiA family. Mg(2+) serves as cofactor.

It catalyses the reaction cob(II)yrinate + 2 L-glutamine + 2 ATP + 2 H2O = cob(II)yrinate a,c diamide + 2 L-glutamate + 2 ADP + 2 phosphate + 2 H(+). It functions in the pathway cofactor biosynthesis; adenosylcobalamin biosynthesis; cob(II)yrinate a,c-diamide from sirohydrochlorin (anaerobic route): step 10/10. Its function is as follows. Catalyzes the ATP-dependent amidation of the two carboxylate groups at positions a and c of cobyrinate, using either L-glutamine or ammonia as the nitrogen source. This Herminiimonas arsenicoxydans protein is Cobyrinate a,c-diamide synthase.